The primary structure comprises 230 residues: Spliceosome-associated protein CWC15 homolog (230 aa).

2 disordered regions span residues 1–157 (MTTA…EEKQ) and 164–183 (AGNPLLNDTPAGSSTSGGDF). Residues 25–34 (KLSNQYSSKD) show a composition bias toward polar residues. Coiled coils occupy residues 47–82 (GQETEADLRKKDLRRELEDKERNAIREKRARDSASS) and 119–164 (DSDE…NILA). Residues 52 to 78 (ADLRKKDLRRELEDKERNAIREKRARD) are compositionally biased toward basic and acidic residues. The segment covering 104–125 (DADEAVDELNSSDDDDSDEDDT) has biased composition (acidic residues). A compositionally biased stretch (basic and acidic residues) spans 131 to 157 (ELEKIKKERAEEKAARDEEIKEKEEKQ).

This sequence belongs to the CWC15 family. As to quaternary structure, component of spliceosomal complex.

The protein localises to the nucleus. Component of a spliceosomal complex that is required for activating pre-mRNA splicing. This Caenorhabditis elegans protein is Spliceosome-associated protein CWC15 homolog.